The primary structure comprises 226 residues: Biosynthetic peptidoglycan transglycosylase (226 aa).

Residues 5–25 form a helical membrane-spanning segment; the sequence is IGVTVLAVVGLLLLPYLLTPL.

This sequence belongs to the glycosyltransferase 51 family.

The protein localises to the cell inner membrane. It carries out the reaction [GlcNAc-(1-&gt;4)-Mur2Ac(oyl-L-Ala-gamma-D-Glu-L-Lys-D-Ala-D-Ala)](n)-di-trans,octa-cis-undecaprenyl diphosphate + beta-D-GlcNAc-(1-&gt;4)-Mur2Ac(oyl-L-Ala-gamma-D-Glu-L-Lys-D-Ala-D-Ala)-di-trans,octa-cis-undecaprenyl diphosphate = [GlcNAc-(1-&gt;4)-Mur2Ac(oyl-L-Ala-gamma-D-Glu-L-Lys-D-Ala-D-Ala)](n+1)-di-trans,octa-cis-undecaprenyl diphosphate + di-trans,octa-cis-undecaprenyl diphosphate + H(+). Its pathway is cell wall biogenesis; peptidoglycan biosynthesis. Peptidoglycan polymerase that catalyzes glycan chain elongation from lipid-linked precursors. This is Biosynthetic peptidoglycan transglycosylase from Nitrobacter hamburgensis (strain DSM 10229 / NCIMB 13809 / X14).